Here is a 255-residue protein sequence, read N- to C-terminus: 5-oxoprolinase subunit A (255 aa).

The protein belongs to the LamB/PxpA family. In terms of assembly, forms a complex composed of PxpA, PxpB and PxpC.

The enzyme catalyses 5-oxo-L-proline + ATP + 2 H2O = L-glutamate + ADP + phosphate + H(+). Its function is as follows. Catalyzes the cleavage of 5-oxoproline to form L-glutamate coupled to the hydrolysis of ATP to ADP and inorganic phosphate. This Nitrobacter hamburgensis (strain DSM 10229 / NCIMB 13809 / X14) protein is 5-oxoprolinase subunit A.